The following is a 235-amino-acid chain: Fibrillarin-like rRNA/tRNA 2'-O-methyltransferase (235 aa).

S-adenosyl-L-methionine-binding positions include 91-92, 110-111, 137-138, and 157-160; these read TT, EF, DA, and DVAQ.

The protein belongs to the methyltransferase superfamily. Fibrillarin family. Interacts with nop5. Component of box C/D small ribonucleoprotein (sRNP) particles that contain rpl7ae, FlpA and nop5, plus a guide RNA.

Involved in pre-rRNA and tRNA processing. Utilizes the methyl donor S-adenosyl-L-methionine to catalyze the site-specific 2'-hydroxyl methylation of ribose moieties in rRNA and tRNA. Site specificity is provided by a guide RNA that base pairs with the substrate. Methylation occurs at a characteristic distance from the sequence involved in base pairing with the guide RNA. The sequence is that of Fibrillarin-like rRNA/tRNA 2'-O-methyltransferase from Pyrobaculum neutrophilum (strain DSM 2338 / JCM 9278 / NBRC 100436 / V24Sta) (Thermoproteus neutrophilus).